The following is a 216-amino-acid chain: 3-keto-L-gulonate-6-phosphate decarboxylase UlaD (216 aa).

A substrate-binding site is contributed by Asp11. Positions 33 and 62 each coordinate Mg(2+). Arg192 contacts substrate.

It belongs to the HPS/KGPDC family. KGPDC subfamily. As to quaternary structure, homodimer. Mg(2+) serves as cofactor.

The catalysed reaction is 3-dehydro-L-gulonate 6-phosphate + H(+) = L-xylulose 5-phosphate + CO2. It participates in cofactor degradation; L-ascorbate degradation; D-xylulose 5-phosphate from L-ascorbate: step 2/4. Catalyzes the decarboxylation of 3-keto-L-gulonate-6-P into L-xylulose-5-P. Is involved in the anaerobic L-ascorbate utilization. The polypeptide is 3-keto-L-gulonate-6-phosphate decarboxylase UlaD (Escherichia coli O139:H28 (strain E24377A / ETEC)).